A 243-amino-acid chain; its full sequence is NAD-dependent protein deacetylase (243 aa).

The Deacetylase sirtuin-type domain occupies 1-243 (MKHDLETLKH…VSVVKSLMTE (243 aa)). NAD(+) contacts are provided by Ala-24, Phe-35, Arg-36, Gln-105, Ile-107, Asp-108, and His-123. Phe-35 serves as a coordination point for nicotinamide. Nicotinamide-binding residues include Ile-107 and Asp-108. His-123 (proton acceptor) is an active-site residue. Positions 131, 134, 151, and 154 each coordinate Zn(2+). NAD(+)-binding residues include Ser-192, Ser-193, Asn-215, and Asp-232.

Belongs to the sirtuin family. Class U subfamily. Requires Zn(2+) as cofactor.

It localises to the cytoplasm. It catalyses the reaction N(6)-acetyl-L-lysyl-[protein] + NAD(+) + H2O = 2''-O-acetyl-ADP-D-ribose + nicotinamide + L-lysyl-[protein]. Its function is as follows. NAD-dependent protein deacetylase which modulates the activities of several enzymes which are inactive in their acetylated form. The protein is NAD-dependent protein deacetylase of Staphylococcus aureus (strain NCTC 8325 / PS 47).